The sequence spans 356 residues: Phosphate acyltransferase (356 aa).

It belongs to the PlsX family. Homodimer. Probably interacts with PlsY.

The protein resides in the cytoplasm. It catalyses the reaction a fatty acyl-[ACP] + phosphate = an acyl phosphate + holo-[ACP]. The protein operates within lipid metabolism; phospholipid metabolism. Functionally, catalyzes the reversible formation of acyl-phosphate (acyl-PO(4)) from acyl-[acyl-carrier-protein] (acyl-ACP). This enzyme utilizes acyl-ACP as fatty acyl donor, but not acyl-CoA. In Xanthobacter autotrophicus (strain ATCC BAA-1158 / Py2), this protein is Phosphate acyltransferase.